The chain runs to 666 residues: Putative L-type lectin-domain containing receptor kinase V.1 (666 aa).

A signal peptide spans 1-18 (MVLLLFLVLFFVPESVVC). Over 19 to 289 (QRPNPNGVEF…WIQSPNGILT (271 aa)) the chain is Extracellular. A legume-lectin like region spans residues 27–257 (EFNTSGNMYT…SHYILGWTFK (231 aa)). N29, N74, N123, N176, N204, and N259 each carry an N-linked (GlcNAc...) asparagine glycan. The chain crosses the membrane as a helical span at residues 290-310 (ISLTVSGVIILIILSLSLWLF). Residues 311–666 (LKRKKLLEVL…FTESFVSHGR (356 aa)) are Cytoplasmic-facing. A Protein kinase domain is found at 344–625 (FKDTEVLGKG…SVAQLPHNLL (282 aa)). Residues 350 to 358 (LGKGGFGKV) and K373 each bind ATP. Residue D469 is the Proton acceptor of the active site.

In the C-terminal section; belongs to the protein kinase superfamily. Ser/Thr protein kinase family. The protein in the N-terminal section; belongs to the leguminous lectin family.

Its subcellular location is the cell membrane. The enzyme catalyses L-seryl-[protein] + ATP = O-phospho-L-seryl-[protein] + ADP + H(+). The catalysed reaction is L-threonyl-[protein] + ATP = O-phospho-L-threonyl-[protein] + ADP + H(+). The protein is Putative L-type lectin-domain containing receptor kinase V.1 (LECRK51) of Arabidopsis thaliana (Mouse-ear cress).